The primary structure comprises 580 residues: Trafficking protein particle complex subunit 14 (580 aa).

Disordered regions lie at residues 95–134 and 480–533; these read GSAGDQDADPPGGGDPGGGGLFRGCSPLLTHGQGPATSGG and VSHP…RSGS. Residues 105–116 show a composition bias toward gly residues; the sequence is PGGGDPGGGGLF. At Ser-491 the chain carries Phosphoserine. The segment covering 492–502 has biased composition (low complexity); that stretch reads RKSSPSSPAVR. A compositionally biased stretch (polar residues) spans 512–525; that stretch reads LGRSQSFSHQQPSR. Ser-517 carries the post-translational modification Phosphoserine. Thr-541 carries the phosphothreonine modification. Ser-546 is modified (phosphoserine).

As to quaternary structure, component of the multisubunit TRAPP II complex, which includes at least TRAPPC1, TRAPPC2, TRAPPC2L, TRAPPC3, TRAPPC4, TRAPPC5, TRAPPC6A/B, TRAPPC9, TRAPPC10 and TRAPPC14. TRAPPC9, TRAPPC10 and TRAPPC14 are specific subunits of the TRAPP II complex. Interacts with alpha-tubulin during mitosis. Interacts with RAB3IP (via the N-terminal region); this interaction mediates RAB3IP association with the TRAPP II complex. Interacts with TRAPPC10. Interacts with FBF1.

The protein localises to the cytoplasm. The protein resides in the cytoskeleton. It is found in the spindle. Its subcellular location is the vesicle. It localises to the midbody. In terms of biological role, specific subunit of the TRAPP (transport protein particle) II complex, a highly conserved vesicle tethering complex that functions in late Golgi trafficking as a membrane tether. TRAPPC14 is dispensable for TRAPPII complex integrity but mediates RAB3IP preciliary vesicle trafficking to the mother centriole during ciliogenesis. Modulates YAP1 activity as transcriptional regulator. The protein is Trafficking protein particle complex subunit 14 of Mus musculus (Mouse).